We begin with the raw amino-acid sequence, 125 residues long: MRNFILFPMMAVVLLSGCQQNRPTTLSPAVSGQAQLEQLASVAAGARYLKNKCNRSDLPADEAINRAAINVGKKRGWANIDANLLSQRSAQLYQQLQQDSTPEATKCSQFNRQLAPFIDSLRDNK.

Residues 1–17 form the signal peptide; that stretch reads MRNFILFPMMAVVLLSG. Residue Cys-18 is the site of N-palmitoyl cysteine attachment. A lipid anchor (S-diacylglycerol cysteine) is attached at Cys-18.

To E.chrysanthemi OutS.

The protein resides in the cell outer membrane. In terms of biological role, involved in the secretion of pullulanase. This is Pullulanase secretion protein PulS (pulS) from Klebsiella pneumoniae.